The primary structure comprises 259 residues: Dickkopf-related protein 2 (259 aa).

The N-terminal stretch at 1 to 33 (MAALMRSKDSSCCLLLLAAVLMVESSQIGSSRA) is a signal peptide. Asn-52 carries an N-linked (GlcNAc...) asparagine glycan. The segment at 78 to 127 (CSSDKECEVGRYCHSPHQGSSACMVCRRKKKRCHRDGMCCPSTRCNNGIC) is DKK-type Cys-1. Intrachain disulfides connect Cys-183–Cys-195, Cys-189–Cys-204, Cys-194–Cys-231, Cys-214–Cys-239, and Cys-233–Cys-256. Residues 183-256 (CLRSSDCIEG…YSSKARLHVC (74 aa)) are DKK-type Cys-2.

This sequence belongs to the dickkopf family. As to quaternary structure, interacts with LRP5 and LRP6. Post-translationally, may be proteolytically processed by a furin-like protease. Expressed in heart, brain, skeletal muscle and lung.

It is found in the secreted. In terms of biological role, antagonizes canonical Wnt signaling by inhibiting LRP5/6 interaction with Wnt and by forming a ternary complex with the transmembrane protein KREMEN that promotes internalization of LRP5/6. DKKs play an important role in vertebrate development, where they locally inhibit Wnt regulated processes such as antero-posterior axial patterning, limb development, somitogenesis and eye formation. In the adult, Dkks are implicated in bone formation and bone disease, cancer and Alzheimer disease. This Homo sapiens (Human) protein is Dickkopf-related protein 2 (DKK2).